A 1665-amino-acid chain; its full sequence is Protein scribble homolog (1665 aa).

Residues 1 to 804 (MLKCIPLWRC…MRVWRERMVE (804 aa)) are sufficient for targeting to adherens junction and to inhibit cell proliferation. Serine 37 carries the phosphoserine modification. LRR repeat units lie at residues 37–58 (SLEE…FFRL), 60–81 (NLRK…VANF), 83–104 (QLVE…IKFC), 106–127 (ALEI…FTQL), 129–150 (SLAH…VGNL), 152–174 (NLVT…SFLV), 175–197 (KLEQ…GALP), 198–219 (NLRE…LGNL), 221–243 (RLVC…GGLA), 244–265 (LLTD…IGQL), 267–288 (QLSI…IGDC), 290–312 (NLSE…GKLT), 313–334 (KLTN…IGGC), 336–357 (ALSV…LAHT), 359–381 (ELHV…THLN), and 382–402 (LKAL…QTED). Phosphothreonine is present on threonine 378. Disordered stretches follow at residues 422-615 (PSLE…HFKI) and 635-689 (REGP…SAPS). The segment covering 428–437 (GQQSSPSESC) has biased composition (polar residues). Residues 452-463 (DTLEGEEDAEEA) show a composition bias toward acidic residues. Residues 455–475 (EGEEDAEEAAAEKRGLQRRAT) are a coiled coil. At threonine 475 the chain carries Phosphothreonine. 2 stretches are compositionally biased toward basic and acidic residues: residues 479-494 (SELK…RRNE) and 570-580 (FAEDTLIPRED). At serine 583 the chain carries Phosphoserine. Residues 653-687 (RAHEEEEEEEEENRDEEEGEATTEEDDKEEAVASA) are a coiled coil. The span at 657 to 681 (EEEEEEEENRDEEEGEATTEEDDKE) shows a compositional bias: acidic residues. Residues threonine 674 and threonine 675 each carry the phosphothreonine modification. 2 positions are modified to phosphoserine: serine 694 and serine 750. The interval 703 to 1215 (IEPARIEEEE…SLESISSIDR (513 aa)) is interaction with ARHGEF7. Positions 714–801 (TLTIVRQTGG…AVQMRVWRER (88 aa)) constitute a PDZ 1 domain. The tract at residues 714–1180 (TLTIVRQTGG…TVLVCDGFDT (467 aa)) is required for interaction with VIM. Residue threonine 812 is modified to Phosphothreonine. Residues serine 821, serine 861, and serine 925 each carry the phosphoserine modification. PDZ domains are found at residues 848-936 (AACL…ERET), 990-1079 (EICL…RRDP), and 1086-1180 (ELCI…GFDT). Phosphoserine is present on residues serine 1126, serine 1206, serine 1209, serine 1212, serine 1218, serine 1262, serine 1265, and serine 1284. Residues 1213-1228 (IDRELSPEGPGKEKEL) show a composition bias toward basic and acidic residues. Residues 1213–1246 (IDRELSPEGPGKEKELASQALPWESESAETTGRN) form a disordered region. Disordered stretches follow at residues 1263-1325 (AGSL…DELP) and 1341-1501 (VHPP…AERR). Residues 1264 to 1277 (GSLQRGPSATTGGK) show a composition bias toward polar residues. Lysine 1291 carries the post-translational modification Omega-N-methylarginine. Alanine 1299 bears the Phosphoserine mark. At arginine 1312 the chain carries Omega-N-methylarginine. At serine 1320 the chain carries Phosphoserine. At threonine 1353 the chain carries Phosphothreonine. Serine 1359 bears the Phosphoserine mark. Basic and acidic residues predominate over residues 1364–1376 (SFRERQKYFELEV). Serine 1389 is subject to Phosphoserine. Positions 1390–1421 (LVGADDLRKMQEEEARKLQQKRAQMLREEAVT) form a coiled coil. The segment covering 1394 to 1406 (DDLRKMQEEEARK) has biased composition (basic and acidic residues). A phosphoserine mark is found at serine 1455 and serine 1458. The span at 1471–1482 (AKAERRHQERLR) shows a compositional bias: basic and acidic residues. Residues serine 1485, serine 1496, and serine 1518 each carry the phosphoserine modification. The disordered stretch occupies residues 1530–1577 (LSKSQEGRGKRGPLERLAEAPSPAPTPSPTPLEDFGLQTSASPGRLPL). A compositionally biased stretch (basic and acidic residues) spans 1534-1547 (QEGRGKRGPLERLA). At serine 1551 the chain carries Phosphoserine. Threonine 1555 carries the post-translational modification Phosphothreonine. A phosphoserine mark is found at serine 1557, serine 1571, and serine 1601. The tract at residues 1632–1665 (GRPSPGAVGPEDMTLCSSRRSVRPGRRGLGPVPS) is disordered.

The protein belongs to the LAP (LRR and PDZ) protein family. In terms of assembly, interacts with UBE3A. Interacts with PAK1 and PAK2. Interacts (via PDZ domains) with VANGL2. Interacts (via PDZ domains) with LPP and TRIP6; the interaction is direct. Interacts (via PDZ domains) with TJP2. Interacts (via PDZ domains) with APC; may mediate APC targeting to adherens junctions of epithelial cells. Interacts (via PDZ domains) with TSHR; regulates TSHR trafficking and function. Interacts with ARHGEF7 and GIT1; interacts directly with ARHGEF7. Interacts with CTNNB1. Interacts with MAPK12. Interacts (via PDZ domains 1 and 3) with MCC. Interacts with DLG5. Interacts with STK4/MST1 and LATS1 in the presence of DLG5. Interacts (via PDZ domain 3) with CRTAM (via PDZ-binding motif); the interaction promotes CRTAM and SCRIB polarization in a subset of CD4+ T-cells. Interacts with YES1, when YES1 is in a closed conformation; the interaction facilitates YES1 autophosphorylation. Interacts (via PDZ domains) with VIM; the interaction protects SCRIB from proteasomal degradation and facilitates SCRIB localization to intermediate filaments, the interaction is reduced by cell contact inhibition. Ubiquitinated; targeted for UBE3A-dependent multiubiquitination and degraded. Post-translationally, palmitoylated. Could be depalmitoylated by LYPLA1 and/or LYPLA2. Palmitoylation of SCRIB by ZDHHC7 is required for its localization to cell-cell junctions, function in the establishement of epithelial cell polarity and the regulation of downstream signaling pathways important for epithelial cell differentiation. In terms of tissue distribution, expressed in CD4+ T-cells (at protein level). Found in a wide range of tissues including liver, kidney and spleen. Also expressed in the brain (at protein level).

The protein localises to the cell membrane. Its subcellular location is the cell junction. It is found in the adherens junction. The protein resides in the cell projection. It localises to the lamellipodium. The protein localises to the cytoplasm. Its subcellular location is the postsynapse. It is found in the presynapse. Functionally, scaffold protein involved in different aspects of polarized cell differentiation regulating epithelial and neuronal morphogenesis and T-cell polarization. Via its interaction with CRTAM, required for the late phase polarization of a subset of CD4+ T-cells, which in turn regulates TCR-mediated proliferation and IFNG and IL22 production. Plays a role in cell directional movement, cell orientation, cell sheet organization and Golgi complex polarization at the cell migration front. Promotes epithelial cell layer barrier function via maintaining cell-cell adhesion. Most probably functions in the establishment of apico-basal cell polarity. May function in cell proliferation regulating progression from G1 to S phase and as a positive regulator of apoptosis for instance during acinar morphogenesis of the mammary epithelium. May regulate cell invasion via MAPK-mediated cell migration and adhesion. May play a role in exocytosis and in the targeting of synaptic vesicles to synapses. Functions as an activator of Rac GTPase activity. This is Protein scribble homolog from Mus musculus (Mouse).